The sequence spans 592 residues: Anaphase-promoting complex subunit 8 (592 aa).

TPR repeat units lie at residues 66 to 99, 160 to 193, 291 to 324, 359 to 392, 393 to 426, 428 to 460, 461 to 494, and 496 to 528; these read EYYKYILAKNYFDLKEYRRCSDVLIDCNKYQLPI, QQQQQQQQQKIEQCQEFKQLFQFYKKLYIENKKD, TYILAQTAIGNYNLRAYDIGEELFERLIELEPNR, PETCCIIGNYYSLKLEHDKAILYFQRALKLNDRY, LSAWTLIGHEFLEIKNVSAAINAYRKAVDINPRD, RAWYGLGQTYQLLKLPLYSLYYFKKATTLRPYD, PRMWCAAGGCYEFIERIPEAIKCYERAEENYDRE, and VAINKLAKLYQEIQNNEKAAFYYKKNLYYCDQE. Residues 129–166 form a disordered region; the sequence is QQQAQQQAQQAQQESQQNDKNNDTNNNNKTDQQQQQQQ.

The protein belongs to the APC8/CDC23 family. In terms of assembly, the APC/C is composed of at least 13 subunits that stay tightly associated throughout the cell cycle: anapc1, anapc2, anapc3, anapc4, anapc5, anapc6, anapc7, anapc8, anapc10, anapc11, cdc20, cdc26 and cdh1.

Its subcellular location is the nucleus. Its pathway is protein modification; protein ubiquitination. Component of the anaphase promoting complex/cyclosome (APC/C), a cell cycle-regulated E3 ubiquitin-protein ligase complex that controls progression through mitosis and the G1 phase of the cell cycle. This is Anaphase-promoting complex subunit 8 (anapc8) from Dictyostelium discoideum (Social amoeba).